Reading from the N-terminus, the 316-residue chain is RNA interference defective protein 11 (316 aa).

The RING-type; degenerate zinc-finger motif lies at cysteine 183–cysteine 218.

Interacts (via RING-type zinc finger domain) with rde-10.

In complex with rde-10, required in the endogenous and exogenous siRNA pathway for biogenesis and accumulation of secondary small interfering RNA (siRNA) intermediates, such as 22G-siRNAs derived from ergo-1 targets. The chain is RNA interference defective protein 11 from Caenorhabditis elegans.